The primary structure comprises 245 residues: Phosphoribosylaminoimidazole-succinocarboxamide synthase (245 aa).

Belongs to the SAICAR synthetase family.

It catalyses the reaction 5-amino-1-(5-phospho-D-ribosyl)imidazole-4-carboxylate + L-aspartate + ATP = (2S)-2-[5-amino-1-(5-phospho-beta-D-ribosyl)imidazole-4-carboxamido]succinate + ADP + phosphate + 2 H(+). It participates in purine metabolism; IMP biosynthesis via de novo pathway; 5-amino-1-(5-phospho-D-ribosyl)imidazole-4-carboxamide from 5-amino-1-(5-phospho-D-ribosyl)imidazole-4-carboxylate: step 1/2. This Nostoc punctiforme (strain ATCC 29133 / PCC 73102) protein is Phosphoribosylaminoimidazole-succinocarboxamide synthase.